A 512-amino-acid polypeptide reads, in one-letter code: MIKDMIASIEQFAQTQADFPVYDCLGERRTYGQLKRDSDSIAAFIDSLALLAKSPVLVFGAQTYDMLATFVALTKSGHAYIPVDVHSAPERILAIIEIAKPSLIIAIEEFPLTIEGISLVSLSEIESAKLAEMPYERTHSVKGDDNYYIIFTSGTTGQPKGVQISHDNLLSFTNWMIEDAAFDVPKQPQMLAQPPYSFDLSVMYWAPTLALGGTLFALPKELVADFKQLFTTIAQLPVGIWTSTPSFADMAMLSDDFCQAKMPALTHFYFDGEELTVSTARKLFERFPSAKIINAYGPTEATVALSAIEITREMVDNYTRLPIGYPKPDSPTYIIDEDGKELASGEQGEIIVTGPAVSKGYLNNPEKTAEAFFTFKGQPAYHTGDIGSLTEDNILLYGGRLDFQIKYAGYRIELEDVSQQLNQSPMVASAVAVPRYNKEHKVQNLLAYIVVKDGVKERFDRELELTKAIKASVKDHMMSYMMPSKFLYRDSLPLTPNGKIDIKTLINEVNNR.

Position 152 to 153 (152 to 153 (TS)) interacts with ATP. Position 199 (D199) interacts with D-alanine. Position 294–299 (294–299 (NAYGPT)) interacts with ATP. A D-alanine-binding site is contributed by V303. Residues D385, 397–400 (YGGR), and K499 contribute to the ATP site. K499 serves as a coordination point for D-alanine.

The protein belongs to the ATP-dependent AMP-binding enzyme family. DltA subfamily.

It is found in the cytoplasm. It carries out the reaction holo-[D-alanyl-carrier protein] + D-alanine + ATP = D-alanyl-[D-alanyl-carrier protein] + AMP + diphosphate. It functions in the pathway cell wall biogenesis; lipoteichoic acid biosynthesis. Functionally, catalyzes the first step in the D-alanylation of lipoteichoic acid (LTA), the activation of D-alanine and its transfer onto the D-alanyl carrier protein (Dcp) DltC. In an ATP-dependent two-step reaction, forms a high energy D-alanyl-AMP intermediate, followed by transfer of the D-alanyl residue as a thiol ester to the phosphopantheinyl prosthetic group of the Dcp. D-alanylation of LTA plays an important role in modulating the properties of the cell wall in Gram-positive bacteria, influencing the net charge of the cell wall. The polypeptide is D-alanine--D-alanyl carrier protein ligase (Streptococcus pyogenes serotype M49 (strain NZ131)).